The chain runs to 374 residues: Putative glutamate--cysteine ligase 2 (374 aa).

It belongs to the glutamate--cysteine ligase type 2 family. YbdK subfamily.

It catalyses the reaction L-cysteine + L-glutamate + ATP = gamma-L-glutamyl-L-cysteine + ADP + phosphate + H(+). Functionally, ATP-dependent carboxylate-amine ligase which exhibits weak glutamate--cysteine ligase activity. This Laribacter hongkongensis (strain HLHK9) protein is Putative glutamate--cysteine ligase 2.